We begin with the raw amino-acid sequence, 336 residues long: Poly(A) RNA polymerase cid12 (336 aa).

Positions 77 and 79 each coordinate Mg(2+). A PAP-associated domain is found at 209-263 (ALLQKFFYFWGVEWTYELFVLRPLTGQIVPKLQKGWLNEVQPNLLSIEDPIDRNN). Serine 325 carries the phosphoserine modification. At threonine 327 the chain carries Phosphothreonine. Serine 329 carries the post-translational modification Phosphoserine.

The protein belongs to the DNA polymerase type-B-like family. As to quaternary structure, cid12, hrr1 and rdp1 interact forming the RNA-directed RNA polymerase complex (RDRC). The RDRC complex interacts with the RITS complex via interaction between ago1 and hrr1. Clr4 has a role in mediating this interaction. The cofactor is Mg(2+). Mn(2+) is required as a cofactor.

It localises to the cytoplasm. It is found in the nucleus. The catalysed reaction is RNA(n) + ATP = RNA(n)-3'-adenine ribonucleotide + diphosphate. Has a role in the RNA interference (RNAi) pathway which is important for heterochromatin formation and accurate chromosome segregation. A member of the RNA-directed RNA polymerase complex (RDRC) which is involved in the generation of small interfering RNAs (siRNAs) and mediate their association with the RNA-induced transcriptional silencing (RITS) complex. RITS acts as a priming complex for dsRNA synthesis at the site of non-coding centromeric RNA. The polypeptide is Poly(A) RNA polymerase cid12 (cid12) (Schizosaccharomyces pombe (strain 972 / ATCC 24843) (Fission yeast)).